The following is a 25-amino-acid chain: Zinc metalloproteinase-disintegrin-like daborhagin-M (25 aa).

The 12-residue stretch at 14–25 folds into the Peptidase M12B domain; sequence SYVELIITVDHS. Glutamate 17 is a binding site for Ca(2+).

It belongs to the venom metalloproteinase (M12B) family. P-III subfamily. P-IIIa sub-subfamily. Monomer. It depends on Zn(2+) as a cofactor. N-glycosylated. Post-translationally, contains 16 disulfide bonds. Expressed by the venom gland.

Its subcellular location is the secreted. Its activity is regulated as follows. Inhibited by EDTA, EGTA and 1,10-phenanthroline. Addition of Mg(2+) or Ca(2+) increases the casein hydrolysis rate. Its function is as follows. Snake venom zinc metalloprotease that possesses high hemorrhagic activity (minimum hemorrhagic dose, MHD=0.86 ug) when subcutaneously injected into mice. Has potent fibrinogenolytic activity on alpha-chain of fibrinogen (FGA). Hydrolyzes model substrate (beta-chain of insulin) at Ala(14)-Leu(15) and Tyr(16)-Leu(17) followed by His(10)-Leu(11) and Phe(24)-Phe(25). This is Zinc metalloproteinase-disintegrin-like daborhagin-M from Daboia siamensis (Eastern Russel's viper).